The sequence spans 419 residues: Enolase (419 aa).

Residue Q161 participates in (2R)-2-phosphoglycerate binding. The Proton donor role is filled by E205. Mg(2+) contacts are provided by D240, E283, and D309. Residues K334, R363, S364, and K385 each contribute to the (2R)-2-phosphoglycerate site. The Proton acceptor role is filled by K334.

The protein belongs to the enolase family. Mg(2+) serves as cofactor.

It is found in the cytoplasm. It localises to the secreted. The protein localises to the cell surface. The enzyme catalyses (2R)-2-phosphoglycerate = phosphoenolpyruvate + H2O. It functions in the pathway carbohydrate degradation; glycolysis; pyruvate from D-glyceraldehyde 3-phosphate: step 4/5. Functionally, catalyzes the reversible conversion of 2-phosphoglycerate (2-PG) into phosphoenolpyruvate (PEP). It is essential for the degradation of carbohydrates via glycolysis. This chain is Enolase, found in Saccharolobus islandicus (strain L.S.2.15 / Lassen #1) (Sulfolobus islandicus).